A 456-amino-acid chain; its full sequence is tRNA modification GTPase MnmE (456 aa).

Arg-21, Glu-85, and Lys-124 together coordinate (6S)-5-formyl-5,6,7,8-tetrahydrofolate. Positions 220 to 379 constitute a TrmE-type G domain; the sequence is QLRIVLYGEP…LLDEIQKKAA (160 aa). K(+) is bound at residue Asn-230. Residues 230 to 235, 249 to 255, and 274 to 277 each bind GTP; these read NTGKSS, SEIPGTT, and DTAG. Ser-234 contacts Mg(2+). 3 residues coordinate K(+): Ser-249, Ile-251, and Thr-254. Position 255 (Thr-255) interacts with Mg(2+). Lys-456 lines the (6S)-5-formyl-5,6,7,8-tetrahydrofolate pocket.

The protein belongs to the TRAFAC class TrmE-Era-EngA-EngB-Septin-like GTPase superfamily. TrmE GTPase family. Homodimer. Heterotetramer of two MnmE and two MnmG subunits. K(+) is required as a cofactor.

It is found in the cytoplasm. Its function is as follows. Exhibits a very high intrinsic GTPase hydrolysis rate. Involved in the addition of a carboxymethylaminomethyl (cmnm) group at the wobble position (U34) of certain tRNAs, forming tRNA-cmnm(5)s(2)U34. The protein is tRNA modification GTPase MnmE of Leptospira borgpetersenii serovar Hardjo-bovis (strain JB197).